The primary structure comprises 297 residues: ATP synthase gamma chain (297 aa).

It belongs to the ATPase gamma chain family. As to quaternary structure, F-type ATPases have 2 components, CF(1) - the catalytic core - and CF(0) - the membrane proton channel. CF(1) has five subunits: alpha(3), beta(3), gamma(1), delta(1), epsilon(1). CF(0) has three main subunits: a, b and c.

It is found in the cell membrane. Its function is as follows. Produces ATP from ADP in the presence of a proton gradient across the membrane. The gamma chain is believed to be important in regulating ATPase activity and the flow of protons through the CF(0) complex. This chain is ATP synthase gamma chain, found in Renibacterium salmoninarum (strain ATCC 33209 / DSM 20767 / JCM 11484 / NBRC 15589 / NCIMB 2235).